A 442-amino-acid polypeptide reads, in one-letter code: D-serine dehydratase (442 aa).

Residue K118 is modified to N6-(pyridoxal phosphate)lysine.

The protein belongs to the serine/threonine dehydratase family. DsdA subfamily. In terms of assembly, monomer. It depends on pyridoxal 5'-phosphate as a cofactor.

It carries out the reaction D-serine = pyruvate + NH4(+). The sequence is that of D-serine dehydratase from Escherichia coli (strain K12 / MC4100 / BW2952).